We begin with the raw amino-acid sequence, 282 residues long: Pantothenate synthetase (282 aa).

30–37 (MGYLHEGH) provides a ligand contact to ATP. Residue H37 is the Proton donor of the active site. Residue Q61 coordinates (R)-pantoate. Position 61 (Q61) interacts with beta-alanine. ATP is bound at residue 147–150 (GMKD). Residue Q153 participates in (R)-pantoate binding. ATP is bound by residues V176 and 184-187 (KSSR).

This sequence belongs to the pantothenate synthetase family. Homodimer.

It localises to the cytoplasm. It catalyses the reaction (R)-pantoate + beta-alanine + ATP = (R)-pantothenate + AMP + diphosphate + H(+). It functions in the pathway cofactor biosynthesis; (R)-pantothenate biosynthesis; (R)-pantothenate from (R)-pantoate and beta-alanine: step 1/1. Its function is as follows. Catalyzes the condensation of pantoate with beta-alanine in an ATP-dependent reaction via a pantoyl-adenylate intermediate. The protein is Pantothenate synthetase of Bacillus mycoides (strain KBAB4) (Bacillus weihenstephanensis).